A 124-amino-acid chain; its full sequence is Small ribosomal subunit protein uS12 (124 aa).

The disordered stretch occupies residues 1–30 (MPTIQQLVRKGRQDKVAKTKTAALKGSPQR). D89 is subject to 3-methylthioaspartic acid. The segment at 102–124 (ADTQGVKNRKQARSRYGAKKEKS) is disordered. The span at 108–118 (KNRKQARSRYG) shows a compositional bias: basic residues.

It belongs to the universal ribosomal protein uS12 family. As to quaternary structure, part of the 30S ribosomal subunit. Contacts proteins S8 and S17. May interact with IF1 in the 30S initiation complex.

Its function is as follows. With S4 and S5 plays an important role in translational accuracy. Interacts with and stabilizes bases of the 16S rRNA that are involved in tRNA selection in the A site and with the mRNA backbone. Located at the interface of the 30S and 50S subunits, it traverses the body of the 30S subunit contacting proteins on the other side and probably holding the rRNA structure together. The combined cluster of proteins S8, S12 and S17 appears to hold together the shoulder and platform of the 30S subunit. This chain is Small ribosomal subunit protein uS12, found in Saccharopolyspora erythraea (strain ATCC 11635 / DSM 40517 / JCM 4748 / NBRC 13426 / NCIMB 8594 / NRRL 2338).